Consider the following 622-residue polypeptide: Membrane protein insertase YidC (622 aa).

Residues 6-26 form a helical membrane-spanning segment; sequence FIAVVLSVLVLVGASFLQELL. Residues 37 to 71 form a disordered region; sequence AEHTLSAVPEETRTQSAHGGAADTQETTQPAAHPS. Helical transmembrane passes span 413-433, 483-503, 513-533, and 579-599; these read LIPN…VLFF, LSGC…YRLF, MFIP…TLPF, and VMPL…LVYW.

This sequence belongs to the OXA1/ALB3/YidC family. Type 1 subfamily. As to quaternary structure, interacts with the Sec translocase complex via SecD. Specifically interacts with transmembrane segments of nascent integral membrane proteins during membrane integration.

The protein localises to the cell inner membrane. Functionally, required for the insertion and/or proper folding and/or complex formation of integral membrane proteins into the membrane. Involved in integration of membrane proteins that insert both dependently and independently of the Sec translocase complex, as well as at least some lipoproteins. Aids folding of multispanning membrane proteins. In Treponema pallidum (strain Nichols), this protein is Membrane protein insertase YidC.